The chain runs to 591 residues: Probable sulfoacetaldehyde acetyltransferase (591 aa).

The segment at 359 to 383 is disordered; the sequence is MDHEDDDPGTEWNVGARQREPDRMS.

Belongs to the TPP enzyme family. Mg(2+) serves as cofactor. Requires thiamine diphosphate as cofactor.

The protein resides in the cytoplasm. It catalyses the reaction acetyl phosphate + sulfite + H(+) = sulfoacetaldehyde + phosphate. The protein operates within organosulfur degradation; taurine degradation via aerobic pathway; acetyl phosphate and sulfite from taurine: step 2/2. In Rhizobium meliloti (strain 1021) (Ensifer meliloti), this protein is Probable sulfoacetaldehyde acetyltransferase (xsc).